Here is a 180-residue protein sequence, read N- to C-terminus: MGDPRKSRRKWEGPGMPWLSQALKSEQKIMGDYGLRNKKEIWLARTIVTGYRHMARSLLALPPAERAVREKQLLGKLYKLGLLKSEQSTIDDILGLEEESLLERRLQTIVHRKGLARTIYQARQLIVHGHIAVGGRKITSPGYIVKRDEEDSIDFYPTSPFKNNPPTAGQGEVNVEQKGN.

The 63-residue stretch at 104-166 folds into the S4 RNA-binding domain; it reads RRLQTIVHRK…PTSPFKNNPP (63 aa). The segment at 155–180 is disordered; the sequence is FYPTSPFKNNPPTAGQGEVNVEQKGN.

Belongs to the universal ribosomal protein uS4 family. Part of the 30S ribosomal subunit. Contacts protein S5. The interaction surface between S4 and S5 is involved in control of translational fidelity.

Its function is as follows. One of the primary rRNA binding proteins, it binds directly to 16S rRNA where it nucleates assembly of the body of the 30S subunit. With S5 and S12 plays an important role in translational accuracy. The protein is Small ribosomal subunit protein uS4 of Metallosphaera sedula (strain ATCC 51363 / DSM 5348 / JCM 9185 / NBRC 15509 / TH2).